Consider the following 250-residue polypeptide: Diaminopimelate epimerase (250 aa).

2 residues coordinate substrate: N11 and N60. The active-site Proton donor is the C69. Substrate is bound by residues 70–71 (GN), N164, and 182–183 (ER). C192 (proton acceptor) is an active-site residue. A substrate-binding site is contributed by 193–194 (GT).

Belongs to the diaminopimelate epimerase family. As to quaternary structure, homodimer.

The protein localises to the cytoplasm. The enzyme catalyses (2S,6S)-2,6-diaminopimelate = meso-2,6-diaminopimelate. The protein operates within amino-acid biosynthesis; L-lysine biosynthesis via DAP pathway; DL-2,6-diaminopimelate from LL-2,6-diaminopimelate: step 1/1. Functionally, catalyzes the stereoinversion of LL-2,6-diaminopimelate (L,L-DAP) to meso-diaminopimelate (meso-DAP), a precursor of L-lysine and an essential component of the bacterial peptidoglycan. The polypeptide is Diaminopimelate epimerase (Nitratiruptor sp. (strain SB155-2)).